The following is a 136-amino-acid chain: uncharacterized protein (136 aa).

This is an uncharacterized protein from Saccharomyces cerevisiae (strain ATCC 204508 / S288c) (Baker's yeast).